The primary structure comprises 271 residues: 2,3,4,5-tetrahydropyridine-2,6-dicarboxylate N-succinyltransferase (271 aa).

Positions 103 and 140 each coordinate substrate.

This sequence belongs to the transferase hexapeptide repeat family. In terms of assembly, homotrimer.

The protein localises to the cytoplasm. The enzyme catalyses (S)-2,3,4,5-tetrahydrodipicolinate + succinyl-CoA + H2O = (S)-2-succinylamino-6-oxoheptanedioate + CoA. It participates in amino-acid biosynthesis; L-lysine biosynthesis via DAP pathway; LL-2,6-diaminopimelate from (S)-tetrahydrodipicolinate (succinylase route): step 1/3. In Methylococcus capsulatus (strain ATCC 33009 / NCIMB 11132 / Bath), this protein is 2,3,4,5-tetrahydropyridine-2,6-dicarboxylate N-succinyltransferase.